The chain runs to 306 residues: MATH domain and coiled-coil domain-containing protein At3g29580 (306 aa).

Residues Asp-6 to Phe-132 form the MATH domain. A coiled-coil region spans residues Phe-253–Ala-298.

The sequence is that of MATH domain and coiled-coil domain-containing protein At3g29580 from Arabidopsis thaliana (Mouse-ear cress).